A 268-amino-acid chain; its full sequence is Probable intron-encoded DNA endonuclease 1 (268 aa).

It belongs to the LAGLIDADG endonuclease family.

It is found in the mitochondrion. Its function is as follows. Mitochondrial DNA endonuclease involved in intron homing. This Mycosarcoma maydis (Corn smut fungus) protein is Probable intron-encoded DNA endonuclease 1 (hegI1).